Consider the following 249-residue polypeptide: MKYLIVNADDFGLTKGVNKGVVECYKNGILRSTSIMCNMPYANEALQVKELCPDLGFGIHITLDAGKPLSSPEKVNTLVDERGYFKRGFPHSLDDADVDQIRIEIEEQIKKAFSLGVTITHMDSHHHAQSHSKVIDAFIEMAHKYNLPVRSTPLDKEKIIKAGLKTVDNFIYTFYDDGVKKENLLSILGSLEEGTTEIMSHPAYVDDELVNISSYHAKREVERKILTDKDVLQFIRDNNILLTNYSILK.

Residues His-60 and His-125 each contribute to the Mg(2+) site.

This sequence belongs to the YdjC deacetylase family. In terms of assembly, homodimer. Mg(2+) is required as a cofactor.

Its function is as follows. Probably catalyzes the deacetylation of acetylated carbohydrates an important step in the degradation of oligosaccharides. This chain is Carbohydrate deacetylase, found in Thermoanaerobacter pseudethanolicus (strain ATCC 33223 / 39E) (Clostridium thermohydrosulfuricum).